A 131-amino-acid polypeptide reads, in one-letter code: Encapsulated ferritin-like protein (131 aa).

Fe cation contacts are provided by E30, E60, and H63. Residues 96-131 (EEEDTGSSSSVAASPTSAPSHGSLGIGSLRQEGKED) form a disordered region. The tract at residues 98–131 (EDTGSSSSVAASPTSAPSHGSLGIGSLRQEGKED) is targeting peptide. A compositionally biased stretch (low complexity) spans 102 to 115 (SSSSVAASPTSAPS).

This sequence belongs to the ferritin-like superfamily. EncFtn family. In terms of assembly, forms dimers at all pH tested; under acidic conditions formes decamers. The N-terminal domain (residues 1-97) crystallizes as a decameric ring. Four decamers are loaded in the encapsulin nanocompartment in a tetrahedral arrangement. A 3 nm gap is consistently seen between the shell and the cargo. The target peptide extends away from the decameric ring, to allow binding to the interior of the encapsulin nanocompartment shell.

It localises to the encapsulin nanocompartment. The enzyme catalyses 4 Fe(2+) + O2 + 4 H(+) = 4 Fe(3+) + 2 H2O. With respect to regulation, the ferroxidase activity is inhibited by zinc. Its function is as follows. Cargo protein of a type 1 encapsulin nanocompartment. A ferritin-like ferroxidase that converts Fe(2+) to Fe(3+) iron inside the encapsulin nanocompartment. Mineralized Fe(3+) is released to the exterior of the decameric complex for deposition in the encapsulin nanocompartment. In solution the decamer binds 10-15 iron cations; in the encapsulin nanocompartment the decamer can bind up to 48 ions, perhaps via its internal channel, and on its exterior. The cargo-loaded nanocompartment maximally sequesters up to 4150 Fe ions. The polypeptide is Encapsulated ferritin-like protein (Haliangium ochraceum (strain DSM 14365 / JCM 11303 / SMP-2)).